A 515-amino-acid polypeptide reads, in one-letter code: MDEFHRYGKEDSSWQQCFLYPLFFQEDLYAISHDHYLDGSSSSEPMEHFSFNDQLSFLTVKRLIGRIREQNHSIGLFVNCDPNPLVDRNKSSYFESVLEGLTLVLEVPFSTRSKYSVQGIKEWKSFRSIHSIFPFLEEKFPHSNYILDTRIPYSIHPEFLVRTFRRWIQDAPSLHPLRSVLYEYRNSPENLQRSIIVAPRVNTRFFLFLWNHYVYECESILVPLLKRSFQSRSSSHGSFPERTLFDRKIKHIIRISHRNSLKSIWSLKDPKIHYVRYGERFIIAIKGTHLLVKKCRYYLPIFRQCYFHLWSEPYRVCSHQLSKNCSSFPGYSLRVRMKPLLVRTKMLGELFITDLITDEFYPIVPIVSIIGLLAREKFCDISGRPISKLAWTSLTDDDILDRFDRIWRNFFHYYSGSFGRDGLYRIKYILSLSCAKTLACKHKSTIRVVRKELGPELFKKSFSKEREFDSPAFSSKAVARSQRERIWHSDIPQINPLANSWQKIQDLKIKNLFDQ.

This sequence belongs to the intron maturase 2 family. MatK subfamily.

It localises to the plastid. The protein localises to the chloroplast. Functionally, usually encoded in the trnK tRNA gene intron. Probably assists in splicing its own and other chloroplast group II introns. This chain is Maturase K, found in Cedrus deodara (Deodar cedar).